A 331-amino-acid chain; its full sequence is Geranylgeranyl pyrophosphate synthase dpmaD (331 aa).

3 residues coordinate isopentenyl diphosphate: K53, R56, and H85. D92 and D96 together coordinate Mg(2+). R101 contributes to the dimethylallyl diphosphate binding site. Residue R102 participates in isopentenyl diphosphate binding. Dimethylallyl diphosphate contacts are provided by K179, T180, and Q213. D216 is a binding site for Mg(2+). The dimethylallyl diphosphate site is built by N220, K230, and K240.

This sequence belongs to the FPP/GGPP synthase family. The cofactor is Mg(2+).

It catalyses the reaction isopentenyl diphosphate + dimethylallyl diphosphate = (2E)-geranyl diphosphate + diphosphate. It carries out the reaction isopentenyl diphosphate + (2E)-geranyl diphosphate = (2E,6E)-farnesyl diphosphate + diphosphate. The catalysed reaction is isopentenyl diphosphate + (2E,6E)-farnesyl diphosphate = (2E,6E,10E)-geranylgeranyl diphosphate + diphosphate. The protein operates within secondary metabolite biosynthesis; terpenoid biosynthesis. Its function is as follows. Geranylgeranyl pyrophosphate synthase; part of the gene cluster that mediates the biosynthesis of the diterpenoid pyrones subglutinols A and B. The first step of the pathway is the synthesis of the alpha-pyrone moiety by the polyketide synthase dpmaA via condensation of one acetyl-CoA starter unit with 3 malonyl-CoA units and 2 methylations. The alpha-pyrone is then combined with geranylgeranyl pyrophosphate (GGPP) formed by the GGPP synthase dpmaD through the action of the prenyltransferase dpmaC to yield a linear alpha-pyrone diterpenoid. Subsequent steps in the diterpenoid pyrone biosynthetic pathway involve the decalin core formation, which is initiated by the epoxidation of the C10-C11 olefin by the FAD-dependent oxidoreductase dpmaE, and is followed by a cyclization cascade catalyzed by the terpene cyclase dpmaB. The dehydrogenase dpmaF is then involved in tetrahydrofuran (THF) ring formation at the C5 unit to complete the formation of subglutinols A and B. In Metarhizium anisopliae (Entomophthora anisopliae), this protein is Geranylgeranyl pyrophosphate synthase dpmaD.